A 498-amino-acid chain; its full sequence is Cytochrome P450 monooxygenase idtP (498 aa).

The first 20 residues, 1–20 (MFLLHILAIGACLLWYFVRS), serve as a signal peptide directing secretion. Heme is bound at residue cysteine 439.

This sequence belongs to the cytochrome P450 family. Heme serves as cofactor.

It participates in secondary metabolite biosynthesis. Its function is as follows. Cytochrome P450 monooxygenase; part of the gene cluster that mediates the biosynthesis of paspalitrems, indole-diterpene (IDT) mycotoxins that are potent tremorgens in mammals. The geranylgeranyl diphosphate (GGPP) synthase idtG is proposed to catalyze the first step in IDT biosynthesis via catalysis of a series of iterative condensations of isopentenyl diphosphate (IPP) with dimethylallyl diphosphate (DMAPP), geranyl diphosphate (GPP), and farnesyl diphosphate (FPP), to form GGPP. Condensation of indole-3-glycerol phosphate with GGPP by the prenyltransferase idtC then forms 3-geranylgeranylindole (3-GGI). Epoxidation of the two terminal alkenes of the geranylgeranyl moiety by the FAD-dependent monooxygenase idtM, and cyclization by the terpene cyclase idtB then leads to the production of paspaline. The cytochrome P450 monooxygenase idtP then catalyzes oxidative elimination of the pendant methyl group at C-12 of paspaline and generates the C-10 ketone to yield 13-desoxypaxilline. The cytochrome P450 monooxygenase idtQ may catalyze the C-13 oxidation of 13-desoxypaxilline to afford paxilline. Considering that both paspalicine and paxilline were detected in C.paspali, idtQ also catalyzes the formation of paspalinine from 13-desoxypaxilline via paspalicine as an intermediate. Finally, the alpha-prenyltransferase idtF prenylates paspalinine at the C-20 or the C-21 positions to yield paspalitrems A and C, respectively. The hydroxylation of paspalitrem A at C-32 by a still unknown oxidase affords paspalitrem B. The protein is Cytochrome P450 monooxygenase idtP of Claviceps paspali (Rye ergot fungus).